A 369-amino-acid polypeptide reads, in one-letter code: Protein FAM187B (369 aa).

An N-terminal signal peptide occupies residues 1–17 (MPPMLWLLLNFAAPALG). Topologically, residues 18 to 333 (FYFSISCPSG…PGRADSVLKG (316 aa)) are extracellular. N-linked (GlcNAc...) asparagine glycans are attached at residues N45, N68, and N130. A helical transmembrane segment spans residues 334 to 354 (LKLVLLVGTVLVLLGALLKFI). At 355-369 (RPSPGKRSKQVLMVK) the chain is on the cytoplasmic side.

This sequence belongs to the FAM187 family.

Its subcellular location is the membrane. The protein is Protein FAM187B (FAM187B) of Macaca fascicularis (Crab-eating macaque).